The following is a 347-amino-acid chain: NADH-ubiquinone oxidoreductase chain 2 (347 aa).

The next 9 helical transmembrane spans lie at 3 to 23 (PPIFIIIMTTVISGTMMVLIS), 25 to 45 (HWLLIWIGFEMNMLAIIPILM), 59 to 79 (YFLTQATASMILMLGIIINLL), 111 to 131 (FHFWVPEVTQGISLSSGMILL), 149 to 169 (INPNLLMSMAIMSMLVAGWGG), 200 to 220 (LMHLNLVMYIMMTLGTFMLFM), 242 to 262 (LLILMLMLSLGGLPPLSGFIP), 274 to 294 (NMIIIPTFMAIAALLSLYFYM), and 325 to 345 (LLPPLIIMSTMLLPMTPMMLI).

This sequence belongs to the complex I subunit 2 family. In terms of assembly, core subunit of respiratory chain NADH dehydrogenase (Complex I) which is composed of 45 different subunits. Interacts with TMEM242.

It localises to the mitochondrion inner membrane. It catalyses the reaction a ubiquinone + NADH + 5 H(+)(in) = a ubiquinol + NAD(+) + 4 H(+)(out). Its function is as follows. Core subunit of the mitochondrial membrane respiratory chain NADH dehydrogenase (Complex I) which catalyzes electron transfer from NADH through the respiratory chain, using ubiquinone as an electron acceptor. Essential for the catalytic activity and assembly of complex I. In Ailurus fulgens (Himalayan red panda), this protein is NADH-ubiquinone oxidoreductase chain 2.